The primary structure comprises 511 residues: RNA-splicing ligase RtcB homolog (511 aa).

Mn(2+) contacts are provided by aspartate 125, cysteine 128, histidine 233, histidine 265, and histidine 359. 232 to 236 (NHYAE) contributes to the GMP binding site. Residues 359 to 360 (HN), 408 to 411 (GGTM), serine 415, 434 to 437 (HGAG), and lysine 510 each bind GMP. The active-site GMP-histidine intermediate is the histidine 434.

This sequence belongs to the RtcB family. As to quaternary structure, catalytic component of the tRNA-splicing ligase complex. Mn(2+) is required as a cofactor.

It catalyses the reaction a 3'-end 3'-phospho-ribonucleotide-RNA + a 5'-end dephospho-ribonucleoside-RNA + GTP = a ribonucleotidyl-ribonucleotide-RNA + GMP + diphosphate. It carries out the reaction a 3'-end 2',3'-cyclophospho-ribonucleotide-RNA + a 5'-end dephospho-ribonucleoside-RNA + GTP + H2O = a ribonucleotidyl-ribonucleotide-RNA + GMP + diphosphate + H(+). Its function is as follows. Catalytic subunit of the tRNA-splicing ligase complex that acts by directly joining spliced tRNA halves to mature-sized tRNAs by incorporating the precursor-derived splice junction phosphate into the mature tRNA as a canonical 3',5'-phosphodiester. May act as an RNA ligase with broad substrate specificity, and may function toward other RNAs. The chain is RNA-splicing ligase RtcB homolog from Plasmodium knowlesi (strain H).